An 812-amino-acid chain; its full sequence is Phospholipase D alpha 1 (812 aa).

The region spanning 1–130 (MAQILLHGTL…LGGEEIDKWL (130 aa)) is the C2 domain. Asp190 contributes to the Ca(2+) binding site. The 39-residue stretch at 330–368 (TMFTHHQKIVVVDHEMPNQGSQQRRIVSFIGGIDLCDGR) folds into the PLD phosphodiesterase 1 domain. Residues His335, Lys337, and Asp342 contribute to the active site. His335 lines the a 1,2-diacyl-sn-glycero-3-phosphate pocket. Positions 374 and 408 each coordinate Ca(2+). The a 1,2-diacyl-sn-glycero-3-phosphate site is built by Gln524 and His663. The region spanning 658 to 685 (FMIYVHTKMMIVDDEYIIIGSANINQRS) is the PLD phosphodiesterase 2 domain. Active-site residues include His663, Lys665, and Asp670. Glu724 contributes to the Ca(2+) binding site.

This sequence belongs to the phospholipase D family. C2-PLD subfamily. In terms of assembly, monomer. Ca(2+) serves as cofactor.

It carries out the reaction a 1,2-diacyl-sn-glycero-3-phosphocholine + H2O = a 1,2-diacyl-sn-glycero-3-phosphate + choline + H(+). Hydrolyzes glycerol-phospholipids at the terminal phosphodiesteric bond. Plays an important role in various cellular processes. In Zea mays (Maize), this protein is Phospholipase D alpha 1 (PLD1).